Consider the following 535-residue polypeptide: UDP-N-acetylmuramoyl-L-alanyl-D-glutamate--2,6-diaminopimelate ligase (535 aa).

A UDP-N-acetyl-alpha-D-muramoyl-L-alanyl-D-glutamate-binding site is contributed by Leu-67. Residue 153 to 159 participates in ATP binding; it reads GTSGKTT. UDP-N-acetyl-alpha-D-muramoyl-L-alanyl-D-glutamate-binding positions include 195–196, Ser-222, and Arg-230; that span reads TT. Lys-262 carries the N6-carboxylysine modification. Meso-2,6-diaminopimelate-binding positions include Arg-424, 448 to 451, Gly-502, and Glu-506; that span reads DNPR. The Meso-diaminopimelate recognition motif motif lies at 448 to 451; sequence DNPR.

Belongs to the MurCDEF family. MurE subfamily. Requires Mg(2+) as cofactor. Post-translationally, carboxylation is probably crucial for Mg(2+) binding and, consequently, for the gamma-phosphate positioning of ATP.

The protein resides in the cytoplasm. It carries out the reaction UDP-N-acetyl-alpha-D-muramoyl-L-alanyl-D-glutamate + meso-2,6-diaminopimelate + ATP = UDP-N-acetyl-alpha-D-muramoyl-L-alanyl-gamma-D-glutamyl-meso-2,6-diaminopimelate + ADP + phosphate + H(+). Its pathway is cell wall biogenesis; peptidoglycan biosynthesis. Its function is as follows. Catalyzes the addition of meso-diaminopimelic acid to the nucleotide precursor UDP-N-acetylmuramoyl-L-alanyl-D-glutamate (UMAG) in the biosynthesis of bacterial cell-wall peptidoglycan. This chain is UDP-N-acetylmuramoyl-L-alanyl-D-glutamate--2,6-diaminopimelate ligase, found in Mycobacterium bovis (strain ATCC BAA-935 / AF2122/97).